A 581-amino-acid polypeptide reads, in one-letter code: Proline--tRNA ligase (581 aa).

This sequence belongs to the class-II aminoacyl-tRNA synthetase family. ProS type 1 subfamily. Homodimer.

The protein localises to the cytoplasm. The catalysed reaction is tRNA(Pro) + L-proline + ATP = L-prolyl-tRNA(Pro) + AMP + diphosphate. Its function is as follows. Catalyzes the attachment of proline to tRNA(Pro) in a two-step reaction: proline is first activated by ATP to form Pro-AMP and then transferred to the acceptor end of tRNA(Pro). As ProRS can inadvertently accommodate and process non-cognate amino acids such as alanine and cysteine, to avoid such errors it has two additional distinct editing activities against alanine. One activity is designated as 'pretransfer' editing and involves the tRNA(Pro)-independent hydrolysis of activated Ala-AMP. The other activity is designated 'posttransfer' editing and involves deacylation of mischarged Ala-tRNA(Pro). The misacylated Cys-tRNA(Pro) is not edited by ProRS. This chain is Proline--tRNA ligase, found in Chlamydia trachomatis serovar D (strain ATCC VR-885 / DSM 19411 / UW-3/Cx).